We begin with the raw amino-acid sequence, 381 residues long: Chaperone protein DnaJ (381 aa).

The region spanning 5–70 (DYYEVLGCDR…QKRGAYDRYG (66 aa)) is the J domain. The CR-type zinc-finger motif lies at 136-214 (GKTAQISIPT…CGGAGRVTRE (79 aa)). The Zn(2+) site is built by cysteine 149, cysteine 152, cysteine 166, cysteine 169, cysteine 188, cysteine 191, cysteine 202, and cysteine 205. 4 CXXCXGXG motif repeats span residues 149 to 156 (CEVCSGSG), 166 to 173 (CRTCNGAG), 188 to 195 (CPSCQGRG), and 202 to 209 (CPNCGGAG).

This sequence belongs to the DnaJ family. As to quaternary structure, homodimer. The cofactor is Zn(2+).

Its subcellular location is the cytoplasm. Functionally, participates actively in the response to hyperosmotic and heat shock by preventing the aggregation of stress-denatured proteins and by disaggregating proteins, also in an autonomous, DnaK-independent fashion. Unfolded proteins bind initially to DnaJ; upon interaction with the DnaJ-bound protein, DnaK hydrolyzes its bound ATP, resulting in the formation of a stable complex. GrpE releases ADP from DnaK; ATP binding to DnaK triggers the release of the substrate protein, thus completing the reaction cycle. Several rounds of ATP-dependent interactions between DnaJ, DnaK and GrpE are required for fully efficient folding. Also involved, together with DnaK and GrpE, in the DNA replication of plasmids through activation of initiation proteins. The sequence is that of Chaperone protein DnaJ from Azorhizobium caulinodans (strain ATCC 43989 / DSM 5975 / JCM 20966 / LMG 6465 / NBRC 14845 / NCIMB 13405 / ORS 571).